We begin with the raw amino-acid sequence, 364 residues long: MKKDYYEILGLSKGASKDEIKKAYRKIAIKYHPDRNQGNEEAASIFKEATQAYEVLIDDNKKAKYDRFGHSAFEGGGFEGFSGGFSGFSDIFEDFGDIFDSFFTGNKGQERNRKHARGEDLGYNIEISLENAYFGYKNNINITRQILCHSCLGKKSEKGTSPSICNMCNGSGRVVQGGGFFRVTTTCSKCYGEGKTISNPCKSCKGKGRITNQETIQLNIPSGIDNNQQIKMKGKGNVNPDNQEYGDLYVKILIRSHKIFKRNGKDLYAMLPISFTQAALGKEVRIKTIASKEIKIQIPKGIENEEQIIVKGAGMPILQTEKFGNLILITKIKTPKNLNSNAIKLFENLSKELRDGDEIDLLKV.

In terms of domain architecture, J spans 4 to 69 (DYYEILGLSK…NKKAKYDRFG (66 aa)). The segment at 135-213 (GYKNNINITR…CKGKGRITNQ (79 aa)) adopts a CR-type zinc-finger fold. Zn(2+) contacts are provided by C148, C151, C165, C168, C187, C190, C201, and C204. CXXCXGXG motif repeat units follow at residues 148–155 (CHSCLGKK), 165–172 (CNMCNGSG), 187–194 (CSKCYGEG), and 201–208 (CKSCKGKG).

The protein belongs to the DnaJ family. Homodimer. Requires Zn(2+) as cofactor.

Its subcellular location is the cytoplasm. Its function is as follows. Participates actively in the response to hyperosmotic and heat shock by preventing the aggregation of stress-denatured proteins and by disaggregating proteins, also in an autonomous, DnaK-independent fashion. Unfolded proteins bind initially to DnaJ; upon interaction with the DnaJ-bound protein, DnaK hydrolyzes its bound ATP, resulting in the formation of a stable complex. GrpE releases ADP from DnaK; ATP binding to DnaK triggers the release of the substrate protein, thus completing the reaction cycle. Several rounds of ATP-dependent interactions between DnaJ, DnaK and GrpE are required for fully efficient folding. Also involved, together with DnaK and GrpE, in the DNA replication of plasmids through activation of initiation proteins. This chain is Chaperone protein DnaJ, found in Borrelia garinii subsp. bavariensis (strain ATCC BAA-2496 / DSM 23469 / PBi) (Borreliella bavariensis).